Reading from the N-terminus, the 229-residue chain is MASALEELQKDLEEVKVLLEKSTRKRLRDTLTNEKSKIETELRNKMQQKSQKKPEFDNEKPAAVVAPLTTGYTVKISNYGWDQSDKFVKIYITLTGVHQVPAENVQVHFTERSFDLLVKNLNGKNYSMIVNNLLKPISVESSSKKVKTDTVIILCRKKAENTRWDYLTQVEKECKEKEKPSYDTEADPSEGLMNVLKKIYEDGDDDMKRTINKAWVESREKQAREDTEF.

A2 is subject to N-acetylalanine. The interaction with SIAH1 stretch occupies residues 2–81 (ASALEELQKD…YTVKISNYGW (80 aa)). A Phosphoserine modification is found at S3. K10 and K21 each carry N6-acetyllysine. The residue at position 36 (S36) is a Phosphoserine. The tract at residues 38-59 (IETELRNKMQQKSQKKPEFDNE) is disordered. Residues 74–168 (VKISNYGWDQ…AENTRWDYLT (95 aa)) enclose the CS domain. An interaction with SKP1 region spans residues 74 to 229 (VKISNYGWDQ…EKQAREDTEF (156 aa)). Residues K86 and K119 each carry the N6-acetyllysine modification. The interval 155-229 (CRKKAENTRW…EKQAREDTEF (75 aa)) is interaction with S100A6. The region spanning 169–229 (QVEKECKEKE…EKQAREDTEF (61 aa)) is the SGS domain.

As to quaternary structure, component of some large E3 complex at least composed of UBE2D1, SIAH1, CACYBP/SIP, SKP1, APC and TBL1X. Interacts directly with SIAH1, SIAH2 and SKP1. Interacts with protein of the S100 family S100A1, S100A6, S100B, S100P and S100A12 in a calcium-dependent manner. In terms of processing, phosphorylated on serine residues. Phosphorylated upon induction by RA or at high calcium concentrations.

It is found in the nucleus. The protein resides in the cytoplasm. May be involved in calcium-dependent ubiquitination and subsequent proteasomal degradation of target proteins. Probably serves as a molecular bridge in ubiquitin E3 complexes. Participates in the ubiquitin-mediated degradation of beta-catenin (CTNNB1). This Rattus norvegicus (Rat) protein is Calcyclin-binding protein (Cacybp).